We begin with the raw amino-acid sequence, 667 residues long: Phosphomethylpyrimidine synthase (667 aa).

Substrate contacts are provided by residues N235, M264, Y293, H329, 349–351 (SRG), 390–393 (DGMR), and E429. H433 contributes to the Zn(2+) binding site. Y456 lines the substrate pocket. H497 provides a ligand contact to Zn(2+). C577, C580, and C585 together coordinate [4Fe-4S] cluster. The interval 618 to 642 (DSYTGSESDTAKRASQREQGMAQMS) is disordered.

Belongs to the ThiC family. In terms of assembly, homodimer. Requires [4Fe-4S] cluster as cofactor.

It carries out the reaction 5-amino-1-(5-phospho-beta-D-ribosyl)imidazole + S-adenosyl-L-methionine = 4-amino-2-methyl-5-(phosphooxymethyl)pyrimidine + CO + 5'-deoxyadenosine + formate + L-methionine + 3 H(+). It functions in the pathway cofactor biosynthesis; thiamine diphosphate biosynthesis. Functionally, catalyzes the synthesis of the hydroxymethylpyrimidine phosphate (HMP-P) moiety of thiamine from aminoimidazole ribotide (AIR) in a radical S-adenosyl-L-methionine (SAM)-dependent reaction. The chain is Phosphomethylpyrimidine synthase from Shewanella pealeana (strain ATCC 700345 / ANG-SQ1).